The chain runs to 83 residues: Exodeoxyribonuclease 7 small subunit (83 aa).

Belongs to the XseB family. In terms of assembly, heterooligomer composed of large and small subunits.

It is found in the cytoplasm. The enzyme catalyses Exonucleolytic cleavage in either 5'- to 3'- or 3'- to 5'-direction to yield nucleoside 5'-phosphates.. Bidirectionally degrades single-stranded DNA into large acid-insoluble oligonucleotides, which are then degraded further into small acid-soluble oligonucleotides. This is Exodeoxyribonuclease 7 small subunit from Nitrobacter hamburgensis (strain DSM 10229 / NCIMB 13809 / X14).